Reading from the N-terminus, the 232-residue chain is Large ribosomal subunit protein uL1 (232 aa).

This sequence belongs to the universal ribosomal protein uL1 family. As to quaternary structure, part of the 50S ribosomal subunit.

Its function is as follows. Binds directly to 23S rRNA. The L1 stalk is quite mobile in the ribosome, and is involved in E site tRNA release. Functionally, protein L1 is also a translational repressor protein, it controls the translation of the L11 operon by binding to its mRNA. This chain is Large ribosomal subunit protein uL1, found in Chlamydia caviae (strain ATCC VR-813 / DSM 19441 / 03DC25 / GPIC) (Chlamydophila caviae).